A 439-amino-acid chain; its full sequence is Serine--tRNA ligase (439 aa).

242 to 244 (TAE) contributes to the L-serine binding site. 273–275 (RQE) serves as a coordination point for ATP. An L-serine-binding site is contributed by E296. Residue 360–363 (EISS) coordinates ATP. S396 lines the L-serine pocket.

Belongs to the class-II aminoacyl-tRNA synthetase family. Type-1 seryl-tRNA synthetase subfamily. In terms of assembly, homodimer. The tRNA molecule binds across the dimer.

It localises to the cytoplasm. It carries out the reaction tRNA(Ser) + L-serine + ATP = L-seryl-tRNA(Ser) + AMP + diphosphate + H(+). It catalyses the reaction tRNA(Sec) + L-serine + ATP = L-seryl-tRNA(Sec) + AMP + diphosphate + H(+). Its pathway is aminoacyl-tRNA biosynthesis; selenocysteinyl-tRNA(Sec) biosynthesis; L-seryl-tRNA(Sec) from L-serine and tRNA(Sec): step 1/1. In terms of biological role, catalyzes the attachment of serine to tRNA(Ser). Is also able to aminoacylate tRNA(Sec) with serine, to form the misacylated tRNA L-seryl-tRNA(Sec), which will be further converted into selenocysteinyl-tRNA(Sec). This is Serine--tRNA ligase from Oenococcus oeni (strain ATCC BAA-331 / PSU-1).